The following is a 339-amino-acid chain: Photosystem II assembly lipoprotein Ycf48 (339 aa).

A signal peptide spans 1 to 22 (MVIVKSWQKIFTLLVVLLLCIG). Cysteine 23 is lipidated: N-palmitoyl cysteine. Cysteine 23 carries the S-diacylglycerol cysteine lipid modification.

It belongs to the Ycf48 family. In terms of assembly, part of early PSII assembly complexes which includes D1 (psbA) and PsbI; not found in mature PSII. Binds to the lumenal side of PSII complexes. Interacts with YidC.

The protein localises to the cellular thylakoid membrane. A factor required for optimal assembly of photosystem II (PSII), acting in the early stages of PSII assembly. Also plays a role in replacement of photodamaged D1 (psbA). Assists YidC in synthesis of chlorophyll-binding proteins. In Nostoc sp. (strain PCC 7120 / SAG 25.82 / UTEX 2576), this protein is Photosystem II assembly lipoprotein Ycf48.